Reading from the N-terminus, the 590-residue chain is Probable lysosomal cobalamin transporter (590 aa).

Transmembrane regions (helical) follow at residues 8–28 (LIWV…SIFI), 46–66 (IFTL…VALV), 94–114 (AVAY…VVPF), 145–165 (TVAF…VPIG), 190–210 (ALTF…VLYT), 314–334 (LLSG…MLLT), 348–367 (CGYI…VFVH), 376–396 (YILF…GIAT), 421–441 (ITTV…SMVV), and 508–528 (FFGI…LLVF). Positions 567–590 (WEDITGRASRSPQVSGSAGRGTRE) are disordered.

It belongs to the LIMR family. LMBRD1 subfamily.

It localises to the lysosome membrane. Functionally, probable lysosomal cobalamin transporter. Required to export cobalamin from lysosomes allowing its conversion to cofactors. The protein is Probable lysosomal cobalamin transporter of Ajellomyces capsulatus (strain NAm1 / WU24) (Darling's disease fungus).